Consider the following 205-residue polypeptide: Adenylyl-sulfate kinase (205 aa).

ATP is bound at residue 35 to 42; it reads GLSGAGKS. Ser109 (phosphoserine intermediate) is an active-site residue.

The protein belongs to the APS kinase family.

The catalysed reaction is adenosine 5'-phosphosulfate + ATP = 3'-phosphoadenylyl sulfate + ADP + H(+). Its pathway is sulfur metabolism; hydrogen sulfide biosynthesis; sulfite from sulfate: step 2/3. Its function is as follows. Catalyzes the synthesis of activated sulfate. This Acaryochloris marina (strain MBIC 11017) protein is Adenylyl-sulfate kinase.